An 820-amino-acid chain; its full sequence is Scavenger receptor class F member 1 (820 aa).

The signal sequence occupies residues 1 to 23 (MLAAMGLELVFSLLLLWTQGTQG). Residues 24-422 (STLDPAGQHV…TCQLGRHGKN (399 aa)) are Extracellular-facing. EGF-like domains are found at residues 56–90 (TIPI…AQCS), 98–133 (WGHD…RLCE), 163–193 (RRPC…RRCS), and 217–251 (WGPE…IRCE). 12 disulfide bridges follow: Cys60–Cys72, Cys66–Cys78, Cys80–Cys89, Cys102–Cys114, Cys108–Cys121, Cys123–Cys132, Cys166–Cys174, Cys168–Cys181, Cys183–Cys192, Cys221–Cys232, Cys225–Cys239, and Cys241–Cys250. Residue Asn291 is glycosylated (N-linked (GlcNAc...) asparagine). 2 consecutive EGF-like domains span residues 304–341 (FGER…HRCE) and 353–384 (CSST…TSCN). The chain crosses the membrane as a helical span at residues 423–443 (ALIVGILVPLLLLLMGIVCCA). The Cytoplasmic segment spans residues 444–820 (YCCSGTRLDP…VVPMSVPPQH (377 aa)). 2 disordered regions span residues 549-685 (PMAQ…IQES) and 715-820 (NYQK…PPQH). Phosphoserine occurs at positions 590 and 607. The span at 631-648 (QEAEESTGPEQVNTEEDA) shows a compositional bias: acidic residues. Positions 650–662 (TATSSGDPATSHG) are enriched in polar residues.

As to quaternary structure, heterophilic interaction with SREC2 via its extracellular domain. The heterophilic interaction is suppressed by the presence of ligand such as Ac-LDL. Interacts with AVIL; the interaction occurs in embryonic dorsal root ganglions at 18 dpc and induces neurite-like outgrowth. As to expression, expressed weakly in brain, spinal cord and dorsal root ganglions.

Its subcellular location is the membrane. In terms of biological role, mediates the binding and degradation of acetylated low density lipoprotein (Ac-LDL). Mediates heterophilic interactions, suggesting a function as adhesion protein. Plays a role in the regulation of neurite-like outgrowth. In Mus musculus (Mouse), this protein is Scavenger receptor class F member 1 (Scarf1).